The primary structure comprises 302 residues: HTH-type transcriptional regulator GbpR (302 aa).

The 56-residue stretch at 1–56 (MSHLRMLVMIEEHGQVSAAAAAMNMTQPAASRMLSEMEAIVKSPLCQRASRGVVLT) folds into the HTH lysR-type domain. The H-T-H motif DNA-binding region spans 16–35 (VSAAAAAMNMTQPAASRMLS).

Belongs to the LysR transcriptional regulatory family.

Its function is as follows. Activator of the expression of chvE when bound to its inducer and represses its expression in the absence of inducer (L-arabinose, D-fucose or D-galactose). Negatively regulates its own expression. The sequence is that of HTH-type transcriptional regulator GbpR (gbpR) from Rhizobium radiobacter (Agrobacterium tumefaciens).